The primary structure comprises 636 residues: Biosynthetic arginine decarboxylase (636 aa).

Lys-110 carries the N6-(pyridoxal phosphate)lysine modification. 290–300 serves as a coordination point for substrate; it reads IDVGGGLGVDY.

It belongs to the Orn/Lys/Arg decarboxylase class-II family. SpeA subfamily. The cofactor is Mg(2+). Pyridoxal 5'-phosphate serves as cofactor.

The catalysed reaction is L-arginine + H(+) = agmatine + CO2. Catalyzes the biosynthesis of agmatine from arginine. The chain is Biosynthetic arginine decarboxylase from Pseudomonas aeruginosa (strain ATCC 15692 / DSM 22644 / CIP 104116 / JCM 14847 / LMG 12228 / 1C / PRS 101 / PAO1).